A 470-amino-acid chain; its full sequence is Sulfate adenylyltransferase subunit 1 (470 aa).

The 217-residue stretch at 22–238 folds into the tr-type G domain; the sequence is KELLRFITCG…ETIKIDYAYT (217 aa). Residues 31–38 form a G1 region; sequence GSVDDGKS. 31 to 38 is a binding site for GTP; sequence GSVDDGKS. The interval 89–93 is G2; the sequence is GITID. Residues 110-113 are G3; that stretch reads DTPG. GTP is bound by residues 110-114 and 165-168; these read DTPGH and NKMD. The interval 165–168 is G4; it reads NKMD. Residues 202-204 are G5; sequence SAL.

Belongs to the TRAFAC class translation factor GTPase superfamily. Classic translation factor GTPase family. CysN/NodQ subfamily. In terms of assembly, heterodimer composed of CysD, the smaller subunit, and CysN.

The enzyme catalyses sulfate + ATP + H(+) = adenosine 5'-phosphosulfate + diphosphate. It functions in the pathway sulfur metabolism; hydrogen sulfide biosynthesis; sulfite from sulfate: step 1/3. With CysD forms the ATP sulfurylase (ATPS) that catalyzes the adenylation of sulfate producing adenosine 5'-phosphosulfate (APS) and diphosphate, the first enzymatic step in sulfur assimilation pathway. APS synthesis involves the formation of a high-energy phosphoric-sulfuric acid anhydride bond driven by GTP hydrolysis by CysN coupled to ATP hydrolysis by CysD. The chain is Sulfate adenylyltransferase subunit 1 from Francisella tularensis subsp. tularensis (strain WY96-3418).